We begin with the raw amino-acid sequence, 746 residues long: Catalase-peroxidase (746 aa).

Polar residues predominate over residues 1-20 (MSSDTSSSRPPQPDSGTASK). A disordered region spans residues 1 to 42 (MSSDTSSSRPPQPDSGTASKSESENPAIPSPKPKAHAPLTNR). The segment at residues 113 to 236 (WHAAGTYRIH…YGATTMGLIY (124 aa)) is a cross-link (tryptophyl-tyrosyl-methioninium (Trp-Tyr) (with M-262)). His114 serves as the catalytic Proton acceptor. Positions 236 to 262 (YVNPEGPEGKPDPIAAAIDIRETFGRM) form a cross-link, tryptophyl-tyrosyl-methioninium (Tyr-Met) (with W-113). His277 contacts heme b.

Belongs to the peroxidase family. Peroxidase/catalase subfamily. As to quaternary structure, homodimer or homotetramer. It depends on heme b as a cofactor. In terms of processing, formation of the three residue Trp-Tyr-Met cross-link is important for the catalase, but not the peroxidase activity of the enzyme.

It carries out the reaction H2O2 + AH2 = A + 2 H2O. The enzyme catalyses 2 H2O2 = O2 + 2 H2O. Bifunctional enzyme with both catalase and broad-spectrum peroxidase activity. May play a role in the intracellular survival of mycobacteria. The protein is Catalase-peroxidase of Mycobacterium intracellulare.